We begin with the raw amino-acid sequence, 316 residues long: KRR1 small subunit processome component (316 aa).

Residues 122 to 192 form the KH domain; that stretch reads ACDVIKIGNF…VRRVVEDCMK (71 aa). Residues 279-304 show a composition bias toward basic and acidic residues; that stretch reads KKLNEQKEKQMEREIERQEERAKDFI. The tract at residues 279–316 is disordered; the sequence is KKLNEQKEKQMEREIERQEERAKDFIAPEEEAYKPNQN.

This sequence belongs to the KRR1 family. In terms of assembly, component of the ribosomal small subunit (SSU) processome composed of at least 40 protein subunits and snoRNA U3. Interacts with snoRNA U3. Interacts with MPP10, KRI1 and with ribosomal proteins RPS1A, RPS4A, RPS4B, RPS8A, RPS8B, RPS11A, RPS11B, RPS13, RPS24, RPS25, RPL4A, RPL7B, RPL8, RPL23, RPL25 and RPL28.

It localises to the nucleus. The protein localises to the nucleolus. In terms of biological role, required for 40S ribosome biogenesis. Involved in nucleolar processing of pre-18S ribosomal RNA and ribosome assembly. Essential for vegetative growth. The protein is KRR1 small subunit processome component of Saccharomyces cerevisiae (strain RM11-1a) (Baker's yeast).